A 178-amino-acid chain; its full sequence is Oligoribonuclease (178 aa).

The Exonuclease domain occupies 7-168; it reads LIWIDLEMTG…DDIRESIAEL (162 aa). Residue tyrosine 128 is part of the active site.

Belongs to the oligoribonuclease family.

The protein localises to the cytoplasm. Functionally, 3'-to-5' exoribonuclease specific for small oligoribonucleotides. The protein is Oligoribonuclease of Pseudomonas savastanoi pv. phaseolicola (strain 1448A / Race 6) (Pseudomonas syringae pv. phaseolicola (strain 1448A / Race 6)).